Here is a 318-residue protein sequence, read N- to C-terminus: Ferrochelatase (318 aa).

2 residues coordinate Fe cation: His186 and Glu264.

This sequence belongs to the ferrochelatase family.

It localises to the cytoplasm. The catalysed reaction is heme b + 2 H(+) = protoporphyrin IX + Fe(2+). The protein operates within porphyrin-containing compound metabolism; protoheme biosynthesis; protoheme from protoporphyrin-IX: step 1/1. In terms of biological role, catalyzes the ferrous insertion into protoporphyrin IX. The sequence is that of Ferrochelatase from Chlamydia abortus (strain DSM 27085 / S26/3) (Chlamydophila abortus).